The following is an 881-amino-acid chain: MESADILPGSRGTVDRRCEGSEEKITPPRPVEDFNPQLFPNEVYLNFTSMHGIQPVVARIRELSRKTVSAAMVPPLEWFERLPRLETPLDIEPLHLPFSVYLISGNAGSGKSTCIQTLNETMDCVITGATRVAAQNVYTKLSSAFATRHINTIFQEFGFRGNHVQAQLGKYQYSCSSSPPPIEELQKRDIVYYWEVLVDITRRLFESTASRGEFENIRALERLLGRAPGSLTRLAFCTNGSLPAFTRTNIVIIDEAGLLGRHLLTVVVYCWWMLNAAYKSPQYAEGKVPVIVCVGSPTQTDSLESRFEHKNLKCHVRSSENVLTHIITNRTIREYVSLSTNWAIFINNKRCQEYEFGELMKVLEYGLPITEEHMRLVDTFVVPEAYINNPANLPGWTRLYSSHKEVSAYMAKLHAHLKVSGERQFVVFTLPAYTFVKTAAFDEYKKITQQPSLSLDKWLAANASRVSNYSQSRDQDAGKTQCEYYSEHGVVVARTDVTYVLNSQVSVTTRMRKFVFGFSGTFETFDAVLKDDAFIKTQGETSVEYAYRFLSTLLFSGMINFYNFLKRPGLDEGRVREAYRRMAALTAKLIPGASVLESACDNPSGAPLNFRGLTDPPGFTGGTTNDWDDDNDVVFAALNEGAIDMLYCNYEFVRPETTQEVYSQFLMLKTMFVGRYSIFMDLFGGDFESSPFDTFVDNISYKGCEIFVGSMRGGVSSIALQTDSYTLMGYTSAPVYPFVEELARRKLHEGIAELFGAMNMPRMVLRDQHGFMSVLNVNLSEFVESVDDVELDMATAVDYGLSSRLAMTIARSQGLSLDKVAICFPRNNLRINSVYVAMSRTVSSRFLRMNLNPLRERHERDTVISEHILAALRDRDVQIVY.

Positions Met1–Glu32 are disordered. Over residues Thr13 to Glu32 the composition is skewed to basic and acidic residues. Gly105–Ser112 contacts ATP.

It belongs to the herpesviridae helicase family. As to quaternary structure, associates with the primase and the primase-associated factor to form the helicase-primase complex.

It localises to the host nucleus. In terms of biological role, component of the helicase/primase complex. Unwinds the DNA at the replication forks and generates single-stranded DNA for both leading and lagging strand synthesis. The primase synthesizes short RNA primers on the lagging strand that the polymerase elongates using dNTPs. Possesses helicase-like motifs and therefore may act as the helicase subunit of the complex. The protein is DNA replication helicase of Equus caballus (Horse).